Consider the following 149-residue polypeptide: Calmodulin (149 aa).

The residue at position 2 (Ala2) is an N-acetylalanine. EF-hand domains follow at residues Glu8–Asn43, Pro44–Asp79, Asp81–Lys116, and Leu117–Lys149. Residues Asp21, Asp23, Asp25, Thr27, Glu32, Asp57, Asp59, Asn61, Thr63, Glu68, Asp94, Asp96, Asn98, Glu105, Asp130, Asp132, Asp134, Gln136, and Glu141 each contribute to the Ca(2+) site.

It belongs to the calmodulin family.

Its function is as follows. Calmodulin mediates the control of a large number of enzymes, ion channels and other proteins by Ca(2+). Among the enzymes to be stimulated by the calmodulin-Ca(2+) complex are a number of protein kinases and phosphatases. This Achlya klebsiana protein is Calmodulin (CMD1).